The primary structure comprises 160 residues: Cytochrome b6-f complex subunit 4 (160 aa).

3 consecutive transmembrane segments (helical) span residues 36–56 (LLYI…GLAV), 95–115 (LLGV…PFLE), and 131–151 (TVFL…TLPI).

It belongs to the cytochrome b family. PetD subfamily. In terms of assembly, the 4 large subunits of the cytochrome b6-f complex are cytochrome b6, subunit IV (17 kDa polypeptide, petD), cytochrome f and the Rieske protein, while the 4 small subunits are petG, petL, petM and petN. The complex functions as a dimer.

Its subcellular location is the plastid. The protein localises to the chloroplast thylakoid membrane. Component of the cytochrome b6-f complex, which mediates electron transfer between photosystem II (PSII) and photosystem I (PSI), cyclic electron flow around PSI, and state transitions. The polypeptide is Cytochrome b6-f complex subunit 4 (Pisum sativum (Garden pea)).